The sequence spans 309 residues: Ornithine carbamoyltransferase (309 aa).

Carbamoyl phosphate-binding positions include S56 to T59, Q83, R107, and H134 to Q137. L-ornithine is bound by residues N165, D223, and S227 to M228. Residues C263–L264 and R291 each bind carbamoyl phosphate.

It belongs to the aspartate/ornithine carbamoyltransferase superfamily. OTCase family.

The protein localises to the cytoplasm. It carries out the reaction carbamoyl phosphate + L-ornithine = L-citrulline + phosphate + H(+). It participates in amino-acid biosynthesis; L-arginine biosynthesis; L-arginine from L-ornithine and carbamoyl phosphate: step 1/3. Reversibly catalyzes the transfer of the carbamoyl group from carbamoyl phosphate (CP) to the N(epsilon) atom of ornithine (ORN) to produce L-citrulline. This chain is Ornithine carbamoyltransferase, found in Burkholderia mallei (strain ATCC 23344).